Consider the following 377-residue polypeptide: Tryptophan 2,3-dioxygenase (377 aa).

Substrate is bound by residues 57-61 (FIITH) and Arg128. Position 313 (His313) interacts with heme. Thr328 lines the substrate pocket.

Belongs to the tryptophan 2,3-dioxygenase family. As to quaternary structure, homotetramer. Dimer of dimers. Requires heme as cofactor.

The enzyme catalyses L-tryptophan + O2 = N-formyl-L-kynurenine. The protein operates within amino-acid degradation; L-tryptophan degradation via kynurenine pathway; L-kynurenine from L-tryptophan: step 1/2. Its pathway is pigment biosynthesis; ommochrome biosynthesis. In terms of biological role, heme-dependent dioxygenase that catalyzes the oxidative cleavage of the L-tryptophan (L-Trp) pyrrole ring and converts L-tryptophan to N-formyl-L-kynurenine. Catalyzes the oxidative cleavage of the indole moiety. This chain is Tryptophan 2,3-dioxygenase, found in Drosophila grimshawi (Hawaiian fruit fly).